The chain runs to 281 residues: 2-dehydro-3-deoxyphosphooctonate aldolase (281 aa).

The protein belongs to the KdsA family.

The protein localises to the cytoplasm. The catalysed reaction is D-arabinose 5-phosphate + phosphoenolpyruvate + H2O = 3-deoxy-alpha-D-manno-2-octulosonate-8-phosphate + phosphate. Its pathway is carbohydrate biosynthesis; 3-deoxy-D-manno-octulosonate biosynthesis; 3-deoxy-D-manno-octulosonate from D-ribulose 5-phosphate: step 2/3. The protein operates within bacterial outer membrane biogenesis; lipopolysaccharide biosynthesis. This is 2-dehydro-3-deoxyphosphooctonate aldolase from Ectopseudomonas mendocina (strain ymp) (Pseudomonas mendocina).